The sequence spans 270 residues: G-box-binding factor 4 (270 aa).

The segment at 1 to 46 is disordered; the sequence is MASFKLMSSSNSDLSRRNSSSASSSPSIRSSHHLRPNPHADHSRIS. Residues 8 to 29 show a composition bias toward low complexity; it reads SSSNSDLSRRNSSSASSSPSIR. Ser-27 carries the post-translational modification Phosphoserine. Residues 187–250 enclose the bZIP domain; that stretch reads AAQRQKRMIK…YKKLMEVLIP (64 aa). The segment at 190 to 208 is basic motif; the sequence is RQKRMIKNRESAARSRERK. A leucine-zipper region spans residues 215-229; sequence LETLAAKLEEENEQL. The segment at 250–270 is disordered; sequence PVDEKPRPPSRPLSRSHSLEW. Positions 261-270 are enriched in low complexity; it reads PLSRSHSLEW.

This sequence belongs to the bZIP family. As to quaternary structure, DNA-binding heterodimer with GBF2 and GBF3; non DNA-binding homodimer.

Its subcellular location is the nucleus. Binds to the G-box motif (5'-CCACGTGG-3') of the rbcS-1A gene promoter. G-box and G-box-like motifs are cis-acting elements defined in promoters of certain plant genes which are regulated by such diverse stimuli as light-induction or hormone control. This chain is G-box-binding factor 4 (GBF4), found in Arabidopsis thaliana (Mouse-ear cress).